Consider the following 595-residue polypeptide: P2X purinoceptor 7 (595 aa).

Residues 1-22 are Cytoplasmic-facing; sequence MPACCSCSDVFQYETNKVTRIQ. C4 is lipidated: S-palmitoyl cysteine. The chain crosses the membrane as a helical span at residues 23–46; it reads SMNYGTIKWFFHVIIFSYVCFALV. Topologically, residues 47–328 are extracellular; it reads SDKLYQRKEP…ILVFGTGGKF (282 aa). 3 disulfides stabilise this stretch: C119/C168, C129/C152, and C135/C162. R125 and R133 each carry ADP-ribosylarginine. The N-linked (GlcNAc...) asparagine glycan is linked to N187. Position 189 (T189) interacts with ATP. N-linked (GlcNAc...) asparagine glycosylation is found at N202 and N213. C216 and C226 are oxidised to a cystine. The N-linked (GlcNAc...) asparagine glycan is linked to N241. A disulfide bond links C260 and C269. N-linked (GlcNAc...) asparagine glycosylation is present at N284. R294 and K311 together coordinate ATP. Residues 329 to 353 form a helical membrane-spanning segment; the sequence is DIIQLVVYIGSTLSYFGLAAVFIDF. S342 serves as a coordination point for Na(+). At Y343 the chain carries Phosphotyrosine. Residues 354 to 595 are Cytoplasmic-facing; sequence LIDTYSSNCC…GQYSGFKSPY (242 aa). The tract at residues 360–377 is C-cys anchor; that stretch reads SNCCRSHIYPWCKCCQPC. Residues C362, C363, C374, and C377 are each lipidated (S-palmitoyl cysteine). Position 390 is a phosphoserine (S390). Residues 395–595 form a cytoplasmic ballast region; the sequence is KPTLKYVSFV…GQYSGFKSPY (201 aa). Zn(2+) contacts are provided by C479, C499, and C506. R546, H547, Y550, and A567 together coordinate GTP. C572 provides a ligand contact to Zn(2+). Positions 583, 589, and 590 each coordinate GTP.

This sequence belongs to the P2X receptor family. In terms of assembly, homotrimers. Interacts with LAMA3, ITGB2, ACTB, ACTN4, SVIL, MPP3, HSPA1, HSPCB, HSPA8, PIK230 and PTPRB. Interacts (via C-terminus) with EMP2. Interacts with isoform B; this interaction potentiates P2RX7 responses. Post-translationally, phosphorylation results in its inactivation. ADP-ribosylation at Arg-125 is necessary and sufficient to activate P2RX7 and gate the channel. In terms of processing, palmitoylation of several cysteines in the C-terminal cytoplasmic tail is required for efficient localization to cell surface. Palmitoylation prevents channel desensitization by physically anchoring the palmitoylated groups to the membrane. In terms of tissue distribution, widely expressed with highest levels in brain and immune tissues. Predominant form in many tissues.

It is found in the cell membrane. It catalyses the reaction Ca(2+)(in) = Ca(2+)(out). It carries out the reaction K(+)(in) = K(+)(out). The enzyme catalyses Na(+)(in) = Na(+)(out). Activated by high extracellular ATP levels (0.1-2.5 mM). The synthetic analog 2'(3')-O-(4-benzoylbenzoyl)ATP (BzATP) acts as a potent agonist. Does not undergo desensitization, instead, undergoes a facilitation process where currents progressively increase with repetitive or prolonged agonist application. Palmitoylation prevents channel desensitization. The permeability of the P2RX7 channel is modulated by the amount of cholesterol in the plasma membrane. In terms of biological role, ATP-gated nonselective transmembrane cation channel that requires high millimolar concentrations of ATP for activation. Upon ATP binding, it rapidly opens to allow the influx of small cations Na(+) and Ca(2+), and the K(+) efflux. Also has the ability to form a large pore in the cell membrane, allowing the passage of large cationic molecules. In microglia, may mediate NADPH transport across the plasma membrane. In immune cells, P2RX7 acts as a molecular sensor in pathological inflammatory states by detecting and responding to high local concentrations of extracellar ATP. In microglial cells, P2RX7 activation leads to the release of pro-inflammatory cytokines, such as IL-1beta and IL-18, through the activation of the NLRP3 inflammasome and caspase-1. Cooperates with KCNK6 to activate NLRP3 inflammasome. Activates death pathways leading to apoptosis and autophagy. Activates death pathways leading to pyroptosis. Its function is as follows. Shows ion channel activity but no macropore function. Non-functional channel. In Homo sapiens (Human), this protein is P2X purinoceptor 7 (P2RX7).